A 241-amino-acid polypeptide reads, in one-letter code: Eukaryotic translation initiation factor 3 subunit J (241 aa).

Residues 1 to 27 (MEEDWEQHGEKEEVPLPAKKPDANKWD) show a composition bias toward basic and acidic residues. Positions 1–99 (MEEDWEQHGE…ENMTPEQKLA (99 aa)) are disordered. Acidic residues predominate over residues 28 to 45 (GEDEEEEVKDSWEDEDEL). Residues 31 to 119 (EEEEVKDSWE…ESDLKNALDT (89 aa)) adopt a coiled-coil conformation. Basic and acidic residues-rich tracts occupy residues 46 to 58 (EEKKDEEKVETPK) and 69 to 90 (IVEKEKQKHEEAERRRLEKEAE).

The protein belongs to the eIF-3 subunit J family. Component of the eukaryotic translation initiation factor 3 (eIF-3) complex.

The protein resides in the cytoplasm. Component of the eukaryotic translation initiation factor 3 (eIF-3) complex, which is involved in protein synthesis of a specialized repertoire of mRNAs and, together with other initiation factors, stimulates binding of mRNA and methionyl-tRNAi to the 40S ribosome. The eIF-3 complex specifically targets and initiates translation of a subset of mRNAs involved in cell proliferation. In Culex quinquefasciatus (Southern house mosquito), this protein is Eukaryotic translation initiation factor 3 subunit J.